A 754-amino-acid chain; its full sequence is ToMV resistance protein Tm-1(GCR237) (754 aa).

Residues 1 to 201 are N-terminal inhibitory domain NN; it reads MATAQSNSPR…AGMVIGRLES (201 aa). Residues 18–20, T55, R92, and 124–127 contribute to the ATP site; these read DTK and GSGG. Positions 211 to 431 are N-terminal inhibitory domain NC; that stretch reads KFTVGVTMFG…VDSFLEISPK (221 aa).

Belongs to the UPF0261 family. Homodimer. In terms of assembly, (Microbial infection) Binds, via an ATP bridge, to the tobamoviruses avirulent (Avr) replication proteins (large and small subunits, e.g. tomato mosaic virus (ToMV/TMV) AC P03587, tobacco mild green mosaic virus (TMGMV) AC P18339 and pepper mild mottle virus (PMMoV) AC P89657) to inhibit their function after the translation of tobamoviruses RNA, but before the viral replication complex formation on the membrane surfaces; this interaction is not possible with resistance-breaking strains replication proteins.

In terms of biological role, inhibitor of viral RNA replication which confers resistance to some tobamoviruses including tomato mosaic virus (ToMV) (e.g. isolate L), tobacco mosaic virus (TMV), tobacco mild green mosaic virus (TMGMV) and pepper mild mottle virus (PMMoV), but not to resistance-breaking isolates of ToMV (e.g. LT1, SL-1 and ToMV1-2) and tomato brown rugose fruit virus (ToBRFV). Prevents tobamoviruses RNA replication by affecting the association of tobamoviruses replication proteins (large and small subunits) with host membrane-associated proteins (e.g. TOM1, TOM2A and ARL8), thus inhibiting the replication complex formation on the membranes and avoiding viral negative-strand RNA synthesis. Inhibits triphosphatase activity of ToMV replication proteins. The chain is ToMV resistance protein Tm-1(GCR237) from Solanum lycopersicum (Tomato).